Reading from the N-terminus, the 446-residue chain is T-box transcription factor TBX20 (446 aa).

Positions 50–80 (SCHPNLGDLPPLETHSDFSSGGGTGSGAPLC) are disordered. Positions 108-287 (LWDKFHELGT…SNPFAKGFRD (180 aa)) form a DNA-binding region, T-box.

The protein localises to the nucleus. Its function is as follows. Transcriptional regulator that may play a very early role in the differentiation of the cardiac precursors. The protein is T-box transcription factor TBX20 (tbx20) of Danio rerio (Zebrafish).